A 263-amino-acid polypeptide reads, in one-letter code: Endonuclease 8 (263 aa).

P2 serves as the catalytic Schiff-base intermediate with DNA. E3 serves as the catalytic Proton donor. Catalysis depends on K53, which acts as the Proton donor; for beta-elimination activity. Q70, R125, and N169 together coordinate DNA. The segment at 229-263 adopts an FPG-type zinc-finger fold; sequence KVFHRDGEVCERCGGIIEKTTLSSRPFYWCPHCQK. Catalysis depends on R253, which acts as the Proton donor; for delta-elimination activity.

This sequence belongs to the FPG family. Zn(2+) is required as a cofactor.

It catalyses the reaction 2'-deoxyribonucleotide-(2'-deoxyribose 5'-phosphate)-2'-deoxyribonucleotide-DNA = a 3'-end 2'-deoxyribonucleotide-(2,3-dehydro-2,3-deoxyribose 5'-phosphate)-DNA + a 5'-end 5'-phospho-2'-deoxyribonucleoside-DNA + H(+). Involved in base excision repair of DNA damaged by oxidation or by mutagenic agents. Acts as a DNA glycosylase that recognizes and removes damaged bases. Has a preference for oxidized pyrimidines, such as thymine glycol, 5,6-dihydrouracil and 5,6-dihydrothymine. Has AP (apurinic/apyrimidinic) lyase activity and introduces nicks in the DNA strand. Cleaves the DNA backbone by beta-delta elimination to generate a single-strand break at the site of the removed base with both 3'- and 5'-phosphates. This chain is Endonuclease 8, found in Salmonella newport (strain SL254).